We begin with the raw amino-acid sequence, 125 residues long: Large ribosomal subunit protein bL12 (125 aa).

This sequence belongs to the bacterial ribosomal protein bL12 family. Homodimer. Part of the ribosomal stalk of the 50S ribosomal subunit. Forms a multimeric L10(L12)X complex, where L10 forms an elongated spine to which 2 to 4 L12 dimers bind in a sequential fashion. Binds GTP-bound translation factors.

Its function is as follows. Forms part of the ribosomal stalk which helps the ribosome interact with GTP-bound translation factors. Is thus essential for accurate translation. This chain is Large ribosomal subunit protein bL12, found in Francisella tularensis subsp. holarctica (strain FTNF002-00 / FTA).